We begin with the raw amino-acid sequence, 92 residues long: MLCTVYKSTRKADTYLFVKKRDCFDDVPEALMAMFGTPQLVMVFPIAKRESLGMADIHKVRAAIDENGYYLQIPPPQVNLLAEHKRNLGLQD.

Positions 1–85 constitute a YcgL domain; that stretch reads MLCTVYKSTR…PQVNLLAEHK (85 aa).

The polypeptide is YcgL domain-containing protein Sputcn32_1766 (Shewanella putrefaciens (strain CN-32 / ATCC BAA-453)).